The following is an 84-amino-acid chain: Sec-independent protein translocase protein TatA (84 aa).

A helical membrane pass occupies residues 4-24 (MSPVHWLILAVVLLVVFGGGG). The segment at 46–84 (DDESMTATDATQAPGHISPPNQNPGYSQTTSSETHRNQV) is disordered. Residues 64-77 (PPNQNPGYSQTTSS) show a composition bias toward polar residues.

Belongs to the TatA/E family. As to quaternary structure, the Tat system comprises two distinct complexes: a TatABC complex, containing multiple copies of TatA, TatB and TatC subunits, and a separate TatA complex, containing only TatA subunits. Substrates initially bind to the TatABC complex, which probably triggers association of the separate TatA complex to form the active translocon.

It is found in the cell inner membrane. In terms of biological role, part of the twin-arginine translocation (Tat) system that transports large folded proteins containing a characteristic twin-arginine motif in their signal peptide across membranes. TatA could form the protein-conducting channel of the Tat system. This Gluconobacter oxydans (strain 621H) (Gluconobacter suboxydans) protein is Sec-independent protein translocase protein TatA.